A 479-amino-acid polypeptide reads, in one-letter code: MAQHTVYFPDAFLTQMREAMPSTLSFDDFLAACQRPLRRSIRVNTLKISVADFLQLTAPYGWTLTPIPWCEEGFWIERDNEDALPLGSTAEHLSGLFYIQEASSMLPVAALFADDNAPQRVMDVAAAPGSKTTQIAARMNNEGAILANEFSASRVKVLHANISRCGISNVALTHFDGRVFGAAVPEMFDAILLDAPCSGEGVVRKDPDALKNWSPESNQEIAATQRELIDSAFHALRPGGTLVYSTCTLNQEENEAVCLWLKETYPDAVEFLPLGDLFPGANKALTEEGFLHVFPQIYDCEGFFVARLRKTQAIPALPAPKYKVGNFPFSPVKDREAGQIRQAAASVGLNWDGNLRLWQRDKELWLFPVGIEALIGKVRFSRLGIKLAETHNKGYRWQHEAVIALATPDNVNAFELTPQEAEEWYRGRDVYPQAAPVADDVLVTFQHQPIGLAKRIGSRLKNSYPRELVRDGKLFTGNA.

S-adenosyl-L-methionine-binding positions include 125-131 (AAAPGSK), E149, D176, and D194. C247 acts as the Nucleophile in catalysis.

It belongs to the class I-like SAM-binding methyltransferase superfamily. RsmB/NOP family.

The protein resides in the cytoplasm. It catalyses the reaction cytidine(1407) in 16S rRNA + S-adenosyl-L-methionine = 5-methylcytidine(1407) in 16S rRNA + S-adenosyl-L-homocysteine + H(+). In terms of biological role, specifically methylates the cytosine at position 1407 (m5C1407) of 16S rRNA. This chain is Ribosomal RNA small subunit methyltransferase F, found in Escherichia coli O139:H28 (strain E24377A / ETEC).